The primary structure comprises 106 residues: UPF0145 protein CTC_01500 (106 aa).

The protein belongs to the UPF0145 family.

This chain is UPF0145 protein CTC_01500, found in Clostridium tetani (strain Massachusetts / E88).